The chain runs to 443 residues: DNA primase DnaG (443 aa).

The 75-residue stretch at 169 to 243 (DSIIIVEGRA…DIDYVSRAPY (75 aa)) folds into the Toprim domain. Mg(2+) is bound by residues glutamate 175, aspartate 217, and aspartate 219.

The protein belongs to the archaeal DnaG primase family. As to quaternary structure, forms a ternary complex with MCM helicase and DNA. Requires Mg(2+) as cofactor.

The enzyme catalyses ssDNA + n NTP = ssDNA/pppN(pN)n-1 hybrid + (n-1) diphosphate.. RNA polymerase that catalyzes the synthesis of short RNA molecules used as primers for DNA polymerase during DNA replication. In Methanococcus vannielii (strain ATCC 35089 / DSM 1224 / JCM 13029 / OCM 148 / SB), this protein is DNA primase DnaG.